A 1378-amino-acid polypeptide reads, in one-letter code: DNA-directed RNA polymerase subunit beta (1378 aa).

The protein belongs to the RNA polymerase beta chain family. In terms of assembly, the RNAP catalytic core consists of 2 alpha, 1 beta, 1 beta' and 1 omega subunit. When a sigma factor is associated with the core the holoenzyme is formed, which can initiate transcription.

The enzyme catalyses RNA(n) + a ribonucleoside 5'-triphosphate = RNA(n+1) + diphosphate. DNA-dependent RNA polymerase catalyzes the transcription of DNA into RNA using the four ribonucleoside triphosphates as substrates. The sequence is that of DNA-directed RNA polymerase subunit beta from Sorangium cellulosum (strain So ce56) (Polyangium cellulosum (strain So ce56)).